A 148-amino-acid chain; its full sequence is 3-hydroxyacyl-[acyl-carrier-protein] dehydratase FabZ (148 aa).

His48 is a catalytic residue.

The protein belongs to the thioester dehydratase family. FabZ subfamily.

The protein resides in the cytoplasm. The enzyme catalyses a (3R)-hydroxyacyl-[ACP] = a (2E)-enoyl-[ACP] + H2O. Its function is as follows. Involved in unsaturated fatty acids biosynthesis. Catalyzes the dehydration of short chain beta-hydroxyacyl-ACPs and long chain saturated and unsaturated beta-hydroxyacyl-ACPs. In Acinetobacter baylyi (strain ATCC 33305 / BD413 / ADP1), this protein is 3-hydroxyacyl-[acyl-carrier-protein] dehydratase FabZ.